Here is a 551-residue protein sequence, read N- to C-terminus: Steroid transmembrane transporter SLC22A24 (551 aa).

The next 12 helical transmembrane spans lie at 16 to 36 (FQIL…PHTV), 146 to 166 (SVAK…GGHL), 174 to 194 (FIVT…AFAP), 204 to 222 (FLTG…LLIL), 235 to 255 (ALIF…AFGI), 260 to 280 (HLQL…RWLS), 350 to 370 (ICLL…LLIN), 378 to 398 (VFLL…LGNF), 410 to 430 (IIFM…TQEM), 435 to 455 (LVLA…TAVL), 469 to 489 (LGVI…LMIL), and 496 to 516 (LPWI…LLLP). The segment at 524–551 (PDSIQDVENKRKSSREVKKDAVAKVTPF) is disordered. Residues 530-545 (VENKRKSSREVKKDAV) are compositionally biased toward basic and acidic residues.

As to expression, localized to the kidney. Mainly expressed in the late segments of proximal tubules.

It is found in the cell membrane. It carries out the reaction estrone 3-sulfate(out) + glutarate(in) = estrone 3-sulfate(in) + glutarate(out). It catalyses the reaction 17beta-estradiol 17-O-(beta-D-glucuronate)(out) + glutarate(in) = 17beta-estradiol 17-O-(beta-D-glucuronate)(in) + glutarate(out). The catalysed reaction is dehydroepiandrosterone 3-sulfate(out) + glutarate(in) = dehydroepiandrosterone 3-sulfate(in) + glutarate(out). In terms of biological role, renal transmembrane organic anion/dicarboxylate exchanger that participates in the reabsorption of conjugated steroids, as well as bile acids, driven by an outward gradient of dicarboxylates such as glutarate or succinate. Transports estrone 3-sulfate and estradiol-17-glucuronide (17beta-estradiol 17-O-(beta-D-glucuronate)), but not androstanediol glucuronide (5alpha-androstane-3alpha,17beta-diol 3-O-(beta-D-glucuronate)), nor taurocholate. Prefers sulfate conjugates of steroids rather than glucuronide conjugates. This is Steroid transmembrane transporter SLC22A24 from Rattus norvegicus (Rat).